The following is a 595-amino-acid chain: Actin-histidine N-methyltransferase (595 aa).

The tract at residues Met-1–Pro-22 is disordered. Residues Gln-10–Val-20 show a composition bias toward polar residues. S-adenosyl-L-methionine is bound by residues Arg-75, Glu-104–Phe-106, Arg-254, Asp-275–His-279, and Ser-325–Phe-327. An SET domain is found at Glu-94–Gly-314. Phosphoserine is present on Ser-513. The span at Glu-549–Glu-573 shows a compositional bias: polar residues. The disordered stretch occupies residues Glu-549 to Glu-595. Residues Gly-574–Lys-583 are compositionally biased toward basic and acidic residues.

It belongs to the class V-like SAM-binding methyltransferase superfamily. SETD3 actin-histidine methyltransferase family. In terms of assembly, interacts with MYOD1. In terms of processing, phosphorylated by GSK3B, which is required for recognition by the SCF(FBXW7) complex and subsequent degradation. Post-translationally, ubiquitinated by the SCF(FBXW7) complex following phosphorylation by GSK3B, leading to its degradation by the proteasome.

The protein localises to the cytoplasm. The protein resides in the nucleus. It catalyses the reaction L-histidyl-[protein] + S-adenosyl-L-methionine = N(tele)-methyl-L-histidyl-[protein] + S-adenosyl-L-homocysteine + H(+). Functionally, protein-histidine N-methyltransferase that specifically mediates 3-methylhistidine (tele-methylhistidine) methylation of actin at 'His-73'. Histidine methylation of actin is required for smooth muscle contraction of the laboring uterus during delivery. Does not have protein-lysine N-methyltransferase activity and probably only catalyzes histidine methylation of actin. This is Actin-histidine N-methyltransferase from Plecturocebus moloch (Dusky titi monkey).